The following is a 499-amino-acid chain: Potassium voltage-gated channel subfamily A member 2 (499 aa).

Residues 1 to 27 (MTVATGDLTDGSVGFAGHPQDSYDPEP) are disordered. The interval 1 to 125 (MTVATGDLTD…YELGEEAMEI (125 aa)) is tetramerization domain. The Cytoplasmic portion of the chain corresponds to 1-160 (MTVATGDLTD…LLFEYPESSG (160 aa)). A helical transmembrane segment spans residues 161–182 (PARIIAIISVTVILISIVSFCL). Over 183-221 (ETLPVFRDENEDMHGSGGNYYSYPNSTVRFQKSNTFTDP) the chain is Extracellular. N207 carries an N-linked (GlcNAc...) asparagine glycan. The chain crosses the membrane as a helical span at residues 222 to 243 (FFIVETLCIIWFSFEFLVRFLA). The S-palmitoyl cysteine moiety is linked to residue C244. Over 244–254 (CPSKAVFFTNL) the chain is Cytoplasmic. A helical membrane pass occupies residues 255–275 (MNIIDIVAIIPYFITLGTELA). At 276–289 (EKTEDGQQGQQAMS) the chain is on the extracellular side. The chain crosses the membrane as a helical; Voltage-sensor span at residues 290-310 (LAILRVIRLVRVFRIFKLSRH). At 311 to 325 (SKGLQILGQTLNASM) the chain is on the cytoplasmic side. An S4-S5 linker region spans residues 312 to 325 (KGLQILGQTLNASM). Residues 326 to 347 (RELGLLIFFLFIGVILFSSAVF) form a helical membrane-spanning segment. The Extracellular segment spans residues 348-361 (FAEADERDSQFPSI). An intramembrane region (helical) is located at residues 362-373 (PDAFWWAVVSMT). Positions 374–379 (TVGYGD) match the Selectivity filter motif. An intramembrane segment occupies 374–381 (TVGYGDMV). Residues 382 to 388 (PTTIGGK) lie on the Extracellular side of the membrane. The chain crosses the membrane as a helical span at residues 389 to 417 (IVGSLCAIAGVLTIALPVPVIVSNFNYFY). Residues 418–499 (HRETEGEEQA…VNITKMLTDV (82 aa)) are Cytoplasmic-facing. A PDZ-binding motif is present at residues 497 to 499 (TDV).

Belongs to the potassium channel family. A (Shaker) (TC 1.A.1.2) subfamily. Kv1.2/KCNA2 sub-subfamily. As to quaternary structure, homotetramer and heterotetramer with other family members. Detected in tadpole brain and spinal cord.

Its subcellular location is the cell membrane. The enzyme catalyses K(+)(in) = K(+)(out). Functionally, voltage-gated potassium channel that mediates transmembrane potassium transport in excitable membranes, primarily in the brain and central nervous system. Prevents aberrant action potential firing and regulates neuronal output. Forms tetrameric potassium-selective channels through which potassium ions pass in accordance with their electrochemical gradient. The channel alternates between opened and closed conformations in response to the voltage difference across the membrane. Can form functional homotetrameric channels and heterotetrameric channels with other family members; the channels characteristics depend critically on the types of channel-forming alpha subunits that are present. Channel properties are modulated by cytoplasmic beta subunits that regulate the subcellular location of the alpha subunits. In vivo, membranes probably contain a mixture of heteromeric potassium channel complexes, making it difficult to assign currents observed in intact tissues to any particular potassium channel family member. Homotetrameric KCNA2 forms a delayed-rectifier potassium channel that opens in response to membrane depolarization, followed by slow spontaneous channel closure. Regulates neuronal excitability and plays a role as pacemaker in the regulation of neuronal action potentials. KCNA2-containing channels play a presynaptic role and prevent hyperexcitability and aberrant action potential firing. Response to toxins that are selective for KCNA2-containing potassium channels suggests that in Purkinje cells, dendritic subthreshold KCNA2-containing potassium channels prevent random spontaneous calcium spikes, suppressing dendritic hyperexcitability without hindering the generation of somatic action potentials, and thereby play an important role in motor coordination. Plays a role in the induction of long-term potentiation of neuron excitability in the CA3 layer of the hippocampus. This chain is Potassium voltage-gated channel subfamily A member 2 (kcna2), found in Xenopus laevis (African clawed frog).